The chain runs to 33 residues: Mu/delta-theraphotoxin-Pm2a (33 aa).

Disulfide bonds link Cys2–Cys16, Cys9–Cys21, and Cys15–Cys27. Phe33 is modified (phenylalanine amide).

As to expression, expressed by the venom gland.

Its subcellular location is the secreted. In terms of biological role, gating-modifier toxin with very weak activity on Nav1.7/SCN9A and Nav1.8/SCN10A. Shows 22% peak current inhibition (at 10 uM) on Nav1.8/SCN10A sodium channels. Show peak current inhibition and delays fast inactivation on Nav1.7/SCN9A (EC(50)&gt;10 uM). The chain is Mu/delta-theraphotoxin-Pm2a from Poecilotheria metallica (Metallic blue ornamental tree spider).